The following is a 481-amino-acid chain: N-succinylglutamate 5-semialdehyde dehydrogenase (481 aa).

206–211 (GSARTG) contacts NAD(+). Catalysis depends on residues Glu-229 and Cys-263.

Belongs to the aldehyde dehydrogenase family. AstD subfamily.

It catalyses the reaction N-succinyl-L-glutamate 5-semialdehyde + NAD(+) + H2O = N-succinyl-L-glutamate + NADH + 2 H(+). Its pathway is amino-acid degradation; L-arginine degradation via AST pathway; L-glutamate and succinate from L-arginine: step 4/5. Its function is as follows. Catalyzes the NAD-dependent reduction of succinylglutamate semialdehyde into succinylglutamate. This is N-succinylglutamate 5-semialdehyde dehydrogenase from Sphingopyxis alaskensis (strain DSM 13593 / LMG 18877 / RB2256) (Sphingomonas alaskensis).